The sequence spans 279 residues: Expansin-A22 (279 aa).

Positions 1–27 (MKLLEKMIYVEFLMIIMVIWVVPMSYG) are cleaved as a signal peptide. Positions 76–186 (QGACGYGNLF…RRIPCSKTGG (111 aa)) constitute an Expansin-like EG45 domain. Positions 196 to 275 (YFLMVLIYNV…NWGFGQTFDG (80 aa)) constitute an Expansin-like CBD domain.

It belongs to the expansin family. Expansin A subfamily.

It is found in the secreted. The protein resides in the cell wall. It localises to the membrane. In terms of biological role, causes loosening and extension of plant cell walls by disrupting non-covalent bonding between cellulose microfibrils and matrix glucans. No enzymatic activity has been found. The sequence is that of Expansin-A22 (EXPA22) from Arabidopsis thaliana (Mouse-ear cress).